The chain runs to 628 residues: Growth hormone receptor (628 aa).

The signal sequence occupies residues 1-18; that stretch reads MDLWQLLLTLAVVGSSNA. Over 19–266 the chain is Extracellular; the sequence is FVGREAVTVT…FTCEEEFQFP (248 aa). N-linked (GlcNAc...) asparagine glycans are attached at residues asparagine 33, asparagine 40, and asparagine 46. Cystine bridges form between cysteine 56–cysteine 66 and cysteine 101–cysteine 112. Asparagine 115 is a glycosylation site (N-linked (GlcNAc...) asparagine). A disulfide bridge connects residues cysteine 126 and cysteine 140. One can recognise a Fibronectin type-III domain in the interval 151-254; sequence PPTGLNWTLM…EILYITLPQS (104 aa). N-linked (GlcNAc...) asparagine glycans are attached at residues asparagine 156, asparagine 161, and asparagine 200. The WSXWS motif motif lies at 240 to 244; sequence YGEFS. Residues 267–287 form a helical membrane-spanning segment; that stretch reads WFLIMIFGIFGLTVMLLVVMF. Over 288 to 628 the chain is Cytoplasmic; that stretch reads SKQQRIKMLI…STDQLNKIML (341 aa). Residues 294-379 are required for JAK2 binding; that stretch reads KMLILPPVPV…HQKSLNILGA (86 aa). The Box 1 motif motif lies at 297 to 305; the sequence is ILPPVPVPK. The short motif at 340–349 is the UbE motif element; it reads DSWVEFIELD. At serine 341 the chain carries Phosphoserine. Phosphotyrosine occurs at positions 483 and 585.

The protein belongs to the type I cytokine receptor family. Type 1 subfamily. As to quaternary structure, on growth hormone (GH) binding, forms homodimers and binds JAK2 via a box 1-containing domain. In terms of processing, the soluble form (GHBP) is produced by phorbol ester-promoted proteolytic cleavage at the cell surface (shedding) by ADAM17/TACE. Shedding is inhibited by growth hormone (GH) binding to the receptor probably due to a conformational change in GHR rendering the receptor inaccessible to ADAM17. Post-translationally, on GH binding, phosphorylated on tyrosine residues in the cytoplasmic domain by JAK2. Ubiquitinated by the ECS(SOCS2) complex following ligand-binding and phosphorylation by JAK2, leading to its degradation by the proteasome. Regulation by the ECS(SOCS2) complex acts as a negative feedback loop of growth hormone receptor signaling. Ubiquitination is not sufficient for GHR internalization.

The protein resides in the cell membrane. It is found in the secreted. Receptor for pituitary gland growth hormone (GH1) involved in regulating postnatal body growth. On ligand binding, couples to the JAK2/STAT5 pathway. Its function is as follows. The soluble form (GHBP) acts as a reservoir of growth hormone in plasma and may be a modulator/inhibitor of GH signaling. In Cavia porcellus (Guinea pig), this protein is Growth hormone receptor (GHR).